Here is a 137-residue protein sequence, read N- to C-terminus: ATP synthase epsilon chain (137 aa).

The protein belongs to the ATPase epsilon chain family. As to quaternary structure, F-type ATPases have 2 components, CF(1) - the catalytic core - and CF(0) - the membrane proton channel. CF(1) has five subunits: alpha(3), beta(3), gamma(1), delta(1), epsilon(1). CF(0) has three main subunits: a, b and c.

It is found in the cell membrane. Its function is as follows. Produces ATP from ADP in the presence of a proton gradient across the membrane. In Syntrophomonas wolfei subsp. wolfei (strain DSM 2245B / Goettingen), this protein is ATP synthase epsilon chain.